We begin with the raw amino-acid sequence, 214 residues long: Transmembrane emp24 domain-containing protein p24beta3 (214 aa).

The first 27 residues, M1 to S27, serve as a signal peptide directing secretion. Topologically, residues L28–R178 are lumenal. The GOLD domain maps to E35–V122. A coiled-coil region spans residues V140 to Q158. Residues R164 and R169 each carry the omega-N-methylated arginine modification. Residue N172 is glycosylated (N-linked (GlcNAc...) asparagine). A helical membrane pass occupies residues V179 to L199. Residues Y200 to V214 are Cytoplasmic-facing. Positions L204 to F205 match the COPII vesicle coat-binding motif. Positions L204–V214 match the COPI vesicle coat-binding motif. Residues R213–V214 carry the Required for the export from the endoplasmic reticulum to the Golgi motif.

The protein belongs to the EMP24/GP25L family. Probably oligomerizes with other members of the EMP24/GP25L family. Associates with the COPI vesicle coat (coatomer). Associates with the COPII vesicle coat (coatomer).

Its subcellular location is the golgi apparatus. The protein resides in the cis-Golgi network membrane. It localises to the golgi stack membrane. In terms of biological role, involved in vesicular protein trafficking. Mainly functions in the early secretory pathway but also in post-Golgi membranes. Thought to act as cargo receptor at the lumenal side for incorporation of secretory cargo molecules into transport vesicles and to be involved in vesicle coat formation at the cytoplasmic side. The polypeptide is Transmembrane emp24 domain-containing protein p24beta3 (Arabidopsis thaliana (Mouse-ear cress)).